Here is a 164-residue protein sequence, read N- to C-terminus: CDP-archaeol synthase (164 aa).

Helical transmembrane passes span Leu-3–Ala-23, Tyr-51–Leu-71, Leu-77–Ile-97, and Leu-122–Ile-142.

It belongs to the CDP-archaeol synthase family. The cofactor is Mg(2+).

It localises to the cell membrane. It carries out the reaction 2,3-bis-O-(geranylgeranyl)-sn-glycerol 1-phosphate + CTP + H(+) = CDP-2,3-bis-O-(geranylgeranyl)-sn-glycerol + diphosphate. It functions in the pathway membrane lipid metabolism; glycerophospholipid metabolism. In terms of biological role, catalyzes the formation of CDP-2,3-bis-(O-geranylgeranyl)-sn-glycerol (CDP-archaeol) from 2,3-bis-(O-geranylgeranyl)-sn-glycerol 1-phosphate (DGGGP) and CTP. This reaction is the third ether-bond-formation step in the biosynthesis of archaeal membrane lipids. This is CDP-archaeol synthase from Pyrobaculum islandicum (strain DSM 4184 / JCM 9189 / GEO3).